The sequence spans 1024 residues: Error-prone DNA polymerase (1024 aa).

This sequence belongs to the DNA polymerase type-C family. DnaE2 subfamily.

Its subcellular location is the cytoplasm. It catalyses the reaction DNA(n) + a 2'-deoxyribonucleoside 5'-triphosphate = DNA(n+1) + diphosphate. DNA polymerase involved in damage-induced mutagenesis and translesion synthesis (TLS). It is not the major replicative DNA polymerase. This chain is Error-prone DNA polymerase, found in Pseudomonas paraeruginosa (strain DSM 24068 / PA7) (Pseudomonas aeruginosa (strain PA7)).